The following is a 561-amino-acid chain: 2-methylisocitrate lyase, mitochondrial (561 aa).

The interval K154–K177 is disordered. Positions S157–K177 are enriched in basic and acidic residues. C228 is an active-site residue.

It belongs to the isocitrate lyase/PEP mutase superfamily. Isocitrate lyase family. It depends on Mg(2+) as a cofactor.

It localises to the mitochondrion matrix. The enzyme catalyses (2S,3R)-3-hydroxybutane-1,2,3-tricarboxylate = pyruvate + succinate. It participates in organic acid metabolism; propanoate degradation. In terms of biological role, component of the methylcitrate cycle that catalyzes the formation of pyruvate and succinate from 2-methylisocitrate during the metabolism of endogenous propionyl-CoA. Plays an important role for growth and development, but also in antagonism, root colonization and induction of defense responses in plants. This Hypocrea atroviridis (strain ATCC 20476 / IMI 206040) (Trichoderma atroviride) protein is 2-methylisocitrate lyase, mitochondrial.